Reading from the N-terminus, the 136-residue chain is MSTAKLEDSTQRPLYGERIIEESKIICFDNPNKKRIYEISIQLPEFTCKCPFSGYPDFAKLNITYQPNLKVYELKSLKLYINNFRDIKISHEEVVNRIMDDLVNEGLPHWIHLNAAFNPRGNVSMQLDIFSGQKRN.

The active-site Thioimide intermediate is the Cys50. The active-site Proton donor is Asp57. Residues 72–74 and 91–92 contribute to the substrate site; these read YEL and HE.

The protein belongs to the GTP cyclohydrolase I family. QueF type 1 subfamily.

The protein resides in the cytoplasm. The enzyme catalyses 7-aminomethyl-7-carbaguanine + 2 NADP(+) = 7-cyano-7-deazaguanine + 2 NADPH + 3 H(+). Its pathway is tRNA modification; tRNA-queuosine biosynthesis. Functionally, catalyzes the NADPH-dependent reduction of 7-cyano-7-deazaguanine (preQ0) to 7-aminomethyl-7-deazaguanine (preQ1). The protein is NADPH-dependent 7-cyano-7-deazaguanine reductase of Prochlorococcus marinus (strain AS9601).